The sequence spans 93 residues: uncharacterized protein (93 aa).

It localises to the plastid. The protein localises to the chloroplast. This is an uncharacterized protein from Diacronema lutheri (Unicellular marine alga).